Here is a 1244-residue protein sequence, read N- to C-terminus: ATP-dependent RNA helicase DHX8 (1244 aa).

K140 participates in a covalent cross-link: Glycyl lysine isopeptide (Lys-Gly) (interchain with G-Cter in SUMO2). Disordered stretches follow at residues 152-289 (LMPS…PAIG) and 361-396 (DVDQ…RPTH). Residues 160-169 (EKQRDPEHRD) show a composition bias toward basic and acidic residues. Basic residues predominate over residues 170 to 179 (RTKKKKRSRS). The segment covering 180 to 220 (RDRDRDRDRDRDRDRDRDRDRDKDRERDRDRERDRERDRER) has biased composition (basic and acidic residues). The span at 221 to 234 (DHKRRHRSRSRSHS) shows a compositional bias: basic residues. The segment covering 256–283 (FKDRKDREKYGERNLDRWRDKHVDRPPP) has biased composition (basic and acidic residues). One can recognise an S1 motif domain in the interval 289 to 360 (GDIYNGKVTS…TGTKTSLSMK (72 aa)). Over residues 386 to 395 (TSMRNPDRPT) the composition is skewed to basic and acidic residues. S419 carries the phosphoserine modification. K423 is covalently cross-linked (Glycyl lysine isopeptide (Lys-Gly) (interchain with G-Cter in SUMO2)). S484 bears the Phosphoserine mark. The region spanning 599-762 (VQAVHDNQIL…FYEAPIFTIP (164 aa)) is the Helicase ATP-binding domain. 612–619 (GETGSGKT) is a binding site for ATP. Residues 709-712 (DEAH) carry the DEAH box motif. The Helicase C-terminal domain maps to 780 to 960 (YLDASLITVM…STVLSLKAMG (181 aa)).

Belongs to the DEAD box helicase family. DEAH subfamily. DDX8/PRP22 sub-subfamily. As to quaternary structure, identified in the spliceosome C complex. Interacts with ARRB2; the interaction is detected in the nucleus upon OR1D2 stimulation. Interacts with SRRM2. Interacts with CACTIN.

It localises to the nucleus. It carries out the reaction ATP + H2O = ADP + phosphate + H(+). Involved in pre-mRNA splicing as component of the spliceosome. Facilitates nuclear export of spliced mRNA by releasing the RNA from the spliceosome. The protein is ATP-dependent RNA helicase DHX8 (Dhx8) of Mus musculus (Mouse).